The chain runs to 491 residues: 3-octaprenyl-4-hydroxybenzoate carboxy-lyase (491 aa).

Mn(2+) is bound at residue N176. Prenylated FMN-binding positions include 179–181 (IYR), 193–195 (RWL), and 198–199 (RG). E242 contributes to the Mn(2+) binding site. D291 serves as the catalytic Proton donor.

The protein belongs to the UbiD family. Homohexamer. Prenylated FMN is required as a cofactor. It depends on Mn(2+) as a cofactor.

The protein localises to the cell membrane. It catalyses the reaction a 4-hydroxy-3-(all-trans-polyprenyl)benzoate + H(+) = a 2-(all-trans-polyprenyl)phenol + CO2. It participates in cofactor biosynthesis; ubiquinone biosynthesis. Its function is as follows. Catalyzes the decarboxylation of 3-octaprenyl-4-hydroxy benzoate to 2-octaprenylphenol, an intermediate step in ubiquinone biosynthesis. The chain is 3-octaprenyl-4-hydroxybenzoate carboxy-lyase from Chromobacterium violaceum (strain ATCC 12472 / DSM 30191 / JCM 1249 / CCUG 213 / NBRC 12614 / NCIMB 9131 / NCTC 9757 / MK).